The primary structure comprises 257 residues: MSENKLNVIDLHKRYGEHEVLKGVSLQANAGDVISIIGSSGSGKSTFLRCINFLEKPSEGSIVVNGQTINLVRDKDGQLKVADKNQLRLLRTRLTMVFQHFNLWSHMTVLENVMEAPIQVLGLSKQEARERAVKYLAKVGIDERAQGKYPVHLSGGQQQRVSIARALAMEPEVLLFDEPTSALDPELVGEVLRIMQQLAEEGKTMVVVTHEMGFARHVSTHVIFLHQGKIEEEGAPEQLFGNPQSPRLQRFLKGSLK.

The ABC transporter domain maps to 6–252 (LNVIDLHKRY…PQSPRLQRFL (247 aa)). ATP is bound by residues S40, G41, G43, K44, S45, and T46.

It belongs to the ABC transporter superfamily. The HisPMQJ complex is composed of two ATP-binding proteins (HisP), two transmembrane proteins (HisM and HisQ) and a solute-binding protein (HisJ). The HisPMQ-ArgT complex is composed of two ATP-binding proteins (HisP), two transmembrane proteins (HisM and HisQ) and a solute-binding protein (ArgT).

The protein resides in the cell inner membrane. The enzyme catalyses a polar amino acid(out) + ATP + H2O = a polar amino acid(in) + ADP + phosphate + H(+). It carries out the reaction L-histidine(out) + ATP + H2O = L-histidine(in) + ADP + phosphate + H(+). It catalyses the reaction L-lysine(out) + ATP + H2O = L-lysine(in) + ADP + phosphate + H(+). The catalysed reaction is L-arginine(out) + ATP + H2O = L-arginine(in) + ADP + phosphate + H(+). The enzyme catalyses L-ornithine(out) + ATP + H2O = L-ornithine(in) + ADP + phosphate + H(+). In terms of biological role, part of the ABC transporter complex HisPMQJ involved in histidine transport. Is also part of the ABC transporter complex HisPMQ-ArgT involved in lysine/arginine/ornithine transport. Shows ATPase activity. Responsible for energy coupling to the transport system. In Escherichia coli (strain K12), this protein is Histidine/lysine/arginine/ornithine transport ATP-binding protein HisP.